A 1336-amino-acid chain; its full sequence is Cytokinesis protein sepH (1336 aa).

Residues 1 to 10 show a composition bias toward low complexity; that stretch reads MVSRSSETSE. The interval 1–46 is disordered; sequence MVSRSSETSEGPPPPSKIPGTPAKTRLSRLNSSPAKQDKPKDDRVV. The span at 36–46 shows a compositional bias: basic and acidic residues; that stretch reads KQDKPKDDRVV. Residues 59–309 form the Protein kinase domain; that stretch reads YQLGDCLGKG…ARKLLKHPWI (251 aa). ATP is bound by residues 65–73 and Lys88; that span reads LGKGAFGSV. The active-site Proton acceptor is Asp181. The segment at 368-402 is disordered; the sequence is SRYTPTKDILPSPVSKHVTDRFRSPDSTEEDNWDD. Residues 384 to 393 are compositionally biased toward basic and acidic residues; it reads HVTDRFRSPD. The stretch at 654-682 forms a coiled coil; it reads AQLEEGLDEVDLEANIARDKYARLRGQVE. Positions 1194–1205 are enriched in basic and acidic residues; sequence ERSESFSLEKRK. Residues 1194–1336 are disordered; sequence ERSESFSLEK…PTHADSDWAS (143 aa). A compositionally biased stretch (polar residues) spans 1213–1236; sequence TSTTPPGYLANQSAPATPQINRFN. Low complexity-rich tracts occupy residues 1253–1264 and 1272–1285; these read PSLSSSALALRP and PSLS…AGPS. Residues 1315–1327 are compositionally biased toward basic residues; that stretch reads SRRRSILPQRRRP.

It belongs to the protein kinase superfamily. Ser/Thr protein kinase family. CDC7 subfamily. Mg(2+) serves as cofactor.

The enzyme catalyses L-seryl-[protein] + ATP = O-phospho-L-seryl-[protein] + ADP + H(+). It catalyses the reaction L-threonyl-[protein] + ATP = O-phospho-L-threonyl-[protein] + ADP + H(+). Its function is as follows. Required for early events during cytokinesis including localization of cytoskeletal components to the cytokinetic ring. The sequence is that of Cytokinesis protein sepH from Aspergillus niger (strain ATCC MYA-4892 / CBS 513.88 / FGSC A1513).